The primary structure comprises 360 residues: Ferredoxin--NADP reductase, leaf isozyme 1, chloroplastic (360 aa).

The N-terminal 49 residues, 1–49 (MAAAISAAVSLPSSKSSSLLTKISSVSPQRIFLKKSTVCYRRVVSVKAQ), are a transit peptide targeting the chloroplast. One can recognise an FAD-binding FR-type domain in the interval 81 to 203 (KNPYTGRCLL…TGPVGKEMLM (123 aa)). FAD is bound by residues 139–142 (RLYS), 160–162 (CVK), tyrosine 166, and 177–179 (VCS). Residues serine 142 and lysine 162 each contribute to the NADP(+) site. An intrachain disulfide couples cysteine 178 to cysteine 183. Serine 179 is modified (phosphoserine). Threonine 210 bears the Phosphothreonine mark. Threonine 218 provides a ligand contact to FAD. Residues threonine 218, 250–251 (VP), 280–281 (SR), lysine 290, 319–320 (GL), and glutamate 358 contribute to the NADP(+) site.

Belongs to the ferredoxin--NADP reductase type 1 family. In terms of assembly, heterodimer with LFNR2. Interacts with PGRL1A and PGRL1B. Interacts with TIC62. Component of high molecular weight thylakoid LFNRs-containing protein complexes containing LIR1, LFNR1, LFNR2, TIC62 and TROL proteins. Interacts directly with LIR1 and TIC62; LIR1 increases the affinity of LFNR1 and LFNR2 for TIC62. Binds to YCF54 in chloroplasts. Requires FAD as cofactor. May form interchain disulfide bonds with LIR1. Expressed in shoots. Restricted to green tissues, being more abundant in siliques.

It localises to the plastid. The protein resides in the chloroplast stroma. The protein localises to the chloroplast thylakoid membrane. It catalyses the reaction 2 reduced [2Fe-2S]-[ferredoxin] + NADP(+) + H(+) = 2 oxidized [2Fe-2S]-[ferredoxin] + NADPH. Its pathway is energy metabolism; photosynthesis. Its function is as follows. Plays a key role in regulating the relative amounts of cyclic and non-cyclic electron flow to meet the demands of the plant for ATP and reducing power. Probable electron donor required for the MgProto monomethylester (MgProtoME) cyclase complex reaction to form protochlorophyllide, thus connecting chlorophyll synthesis with photosynthetic activity. This Arabidopsis thaliana (Mouse-ear cress) protein is Ferredoxin--NADP reductase, leaf isozyme 1, chloroplastic.